Here is a 587-residue protein sequence, read N- to C-terminus: Sorting nexin 2A (587 aa).

Disordered stretches follow at residues 1-78 (MMGS…DSDP) and 115-151 (SPFD…SSSD). Composition is skewed to polar residues over residues 42–59 (NGDT…TLSN) and 123–134 (SEINGTEDNSLH). A compositionally biased stretch (low complexity) spans 135-150 (SQFSDSLSRSPSSSSS). Position 144 is a phosphoserine (S144). The region spanning 157–277 (VSNPQKEQEI…KVFLQVQGKL (121 aa)) is the PX domain. Residues R201, K227, and R244 each coordinate a 1,2-diacyl-sn-glycero-3-phospho-(1D-myo-inositol-3-phosphate). The BAR domain maps to 331-586 (LRQSVSNDWG…TSQYDREKQS (256 aa)).

This sequence belongs to the sorting nexin family. In terms of assembly, homodimer. Heterodimer with SNX1 or SNX2A. Component of the retromer complex which consists of VPS29 (MAG1), VPS26 (VPS26A or VPS26B), VPS35 (VPS35A or VPS35B or VPS35C), VPS5/17 (SNX1 or SNX2A or SNX2B). As to expression, ubiquitously expressed but at a lower level in flowers, siliques, and senescing leaves.

The protein resides in the cytoplasm. It localises to the endosome membrane. The protein localises to the prevacuolar compartment membrane. It is found in the golgi apparatus. Its subcellular location is the trans-Golgi network membrane. In terms of biological role, plays a role in vesicular protein sorting. Acts at the crossroads between the secretory and endocytic pathways. Is involved in the endosome to vacuole protein transport and, as component of the membrane-associated retromer complex, is also involved in endosome-to-Golgi retrograde transport. Also involved in the efficient sorting of seed storage protein globulin 12S. In Arabidopsis thaliana (Mouse-ear cress), this protein is Sorting nexin 2A (SNX2A).